The chain runs to 161 residues: Allophycocyanin beta chain (161 aa).

N71 is modified (N4-methylasparagine). C81 serves as a coordination point for (2R,3E)-phycocyanobilin.

This sequence belongs to the phycobiliprotein family. Heterodimer of an alpha and a beta chain. Contains one covalently linked phycocyanobilin chromophore.

It is found in the plastid. It localises to the chloroplast thylakoid membrane. Light-harvesting photosynthetic bile pigment-protein from the phycobiliprotein complex. Allophycocyanin has a maximum absorption at approximately 650 nanometers. The sequence is that of Allophycocyanin beta chain (apcB) from Aglaothamnion neglectum (Red alga).